The primary structure comprises 192 residues: dTTP/UTP pyrophosphatase (192 aa).

Residue Asp-71 is the Proton acceptor of the active site.

It belongs to the Maf family. YhdE subfamily. The cofactor is a divalent metal cation.

It is found in the cytoplasm. It carries out the reaction dTTP + H2O = dTMP + diphosphate + H(+). It catalyses the reaction UTP + H2O = UMP + diphosphate + H(+). Functionally, nucleoside triphosphate pyrophosphatase that hydrolyzes dTTP and UTP. May have a dual role in cell division arrest and in preventing the incorporation of modified nucleotides into cellular nucleic acids. The polypeptide is dTTP/UTP pyrophosphatase (Pseudoalteromonas atlantica (strain T6c / ATCC BAA-1087)).